The primary structure comprises 289 residues: Phosphatidylglycerol--prolipoprotein diacylglyceryl transferase (289 aa).

The next 3 membrane-spanning stretches (helical) occupy residues 24-44 (GIAI…VYLL), 70-90 (GGVL…DWFL), and 111-131 (GING…LWLF). R158 provides a ligand contact to a 1,2-diacyl-sn-glycero-3-phospho-(1'-sn-glycerol). A run of 2 helical transmembrane segments spans residues 219-239 (GYLS…IEFF) and 253-273 (FSMG…ILVW).

The protein belongs to the Lgt family.

The protein localises to the cell inner membrane. It carries out the reaction L-cysteinyl-[prolipoprotein] + a 1,2-diacyl-sn-glycero-3-phospho-(1'-sn-glycerol) = an S-1,2-diacyl-sn-glyceryl-L-cysteinyl-[prolipoprotein] + sn-glycerol 1-phosphate + H(+). It participates in protein modification; lipoprotein biosynthesis (diacylglyceryl transfer). Catalyzes the transfer of the diacylglyceryl group from phosphatidylglycerol to the sulfhydryl group of the N-terminal cysteine of a prolipoprotein, the first step in the formation of mature lipoproteins. This is Phosphatidylglycerol--prolipoprotein diacylglyceryl transferase from Chlorobaculum tepidum (strain ATCC 49652 / DSM 12025 / NBRC 103806 / TLS) (Chlorobium tepidum).